The primary structure comprises 577 residues: Arginine--tRNA ligase (577 aa).

The short motif at 122–132 (PNVAKEMHVGH) is the 'HIGH' region element.

The protein belongs to the class-I aminoacyl-tRNA synthetase family. In terms of assembly, monomer.

Its subcellular location is the cytoplasm. The catalysed reaction is tRNA(Arg) + L-arginine + ATP = L-arginyl-tRNA(Arg) + AMP + diphosphate. In Citrobacter koseri (strain ATCC BAA-895 / CDC 4225-83 / SGSC4696), this protein is Arginine--tRNA ligase.